The chain runs to 196 residues: Cilia- and flagella-associated protein 107 (196 aa).

2 mn regions span residues 46–61 (TPQTIYRKEYVPFPGH) and 96–108 (ISTYDDHYNRHNY). The segment at 168 to 196 (YPRPPAGAMSRREHAIPVPPPRLQPVPHF) is disordered. Positions 184 to 196 (PVPPPRLQPVPHF) are enriched in pro residues.

In terms of assembly, microtubule inner protein component of sperm flagellar doublet microtubules. In terms of tissue distribution, expressed in trachea multiciliated cells.

It localises to the cytoplasm. The protein resides in the cytoskeleton. It is found in the cilium axoneme. The protein localises to the flagellum axoneme. Its function is as follows. Microtubule inner protein (MIP) part of the dynein-decorated doublet microtubules (DMTs) in cilia axoneme, which is required for motile cilia beating. The chain is Cilia- and flagella-associated protein 107 from Bos taurus (Bovine).